Consider the following 156-residue polypeptide: Small ribosomal subunit protein uS7 (156 aa).

Belongs to the universal ribosomal protein uS7 family. As to quaternary structure, part of the 30S ribosomal subunit. Contacts proteins S9 and S11.

In terms of biological role, one of the primary rRNA binding proteins, it binds directly to 16S rRNA where it nucleates assembly of the head domain of the 30S subunit. Is located at the subunit interface close to the decoding center, probably blocks exit of the E-site tRNA. In Exiguobacterium sibiricum (strain DSM 17290 / CCUG 55495 / CIP 109462 / JCM 13490 / 255-15), this protein is Small ribosomal subunit protein uS7.